The sequence spans 96 residues: HssA/B-like protein 25 (96 aa).

It belongs to the hssA/B family.

The chain is HssA/B-like protein 25 (hssl25) from Dictyostelium discoideum (Social amoeba).